Reading from the N-terminus, the 1177-residue chain is DNA-directed RNA polymerase subunit beta' (1177 aa).

Positions 60, 62, 75, and 78 each coordinate Zn(2+). Mg(2+) contacts are provided by D450, D452, and D454. The Zn(2+) site is built by C795, C869, C876, and C879.

The protein belongs to the RNA polymerase beta' chain family. In terms of assembly, the RNAP catalytic core consists of 2 alpha, 1 beta, 1 beta' and 1 omega subunit. When a sigma factor is associated with the core the holoenzyme is formed, which can initiate transcription. Requires Mg(2+) as cofactor. Zn(2+) is required as a cofactor.

It catalyses the reaction RNA(n) + a ribonucleoside 5'-triphosphate = RNA(n+1) + diphosphate. DNA-dependent RNA polymerase catalyzes the transcription of DNA into RNA using the four ribonucleoside triphosphates as substrates. The polypeptide is DNA-directed RNA polymerase subunit beta' (Clostridium botulinum (strain Alaska E43 / Type E3)).